The primary structure comprises 316 residues: GMP reductase (316 aa).

The active-site Thioimidate intermediate is C175. Position 202 to 225 (202 to 225 (VIADGGIVEHGDIAKALVCGATMV)) interacts with NADP(+).

Belongs to the IMPDH/GMPR family. GuaC type 2 subfamily.

The enzyme catalyses IMP + NH4(+) + NADP(+) = GMP + NADPH + 2 H(+). Catalyzes the irreversible NADPH-dependent deamination of GMP to IMP. It functions in the conversion of nucleobase, nucleoside and nucleotide derivatives of G to A nucleotides, and in maintaining the intracellular balance of A and G nucleotides. This chain is GMP reductase, found in Chromobacterium violaceum (strain ATCC 12472 / DSM 30191 / JCM 1249 / CCUG 213 / NBRC 12614 / NCIMB 9131 / NCTC 9757 / MK).